The primary structure comprises 388 residues: 4-hydroxycoumarin synthase 2 (388 aa).

Residue cysteine 159 is part of the active site.

Belongs to the thiolase-like superfamily. Chalcone/stilbene synthases family. As to quaternary structure, homodimer.

The catalysed reaction is 2-hydroxybenzoyl-CoA + malonyl-CoA = 4-hydroxycoumarin + CO2 + 2 CoA. Type III polyketide synthase involved preferentially in the biosynthesis of 4-hydroxycoumarin from salicoyl-CoA. Can also use benzoyl-CoA and malonyl-CoA to produce 3,5-dihydroxybiphenyl as a major product and benzoyldiacetic acid lactone as a minor side product. Can also use m-hydroxybenzoyl-CoA as substrate, producing m-hydroxybenzoyl diacetic acid lactone as a derailment product. No activity with p-hydroxybenzoyl-CoA, CoA-linked cinnamic acids or acetyl-CoA. In Sorbus aucuparia (European mountain ash), this protein is 4-hydroxycoumarin synthase 2 (BIS3).